Reading from the N-terminus, the 465-residue chain is Lactaldehyde dehydrogenase (465 aa).

NAD(+) is bound at residue 220–225; it reads GSVEVG. Residues glutamate 240 and cysteine 274 contribute to the active site.

This sequence belongs to the aldehyde dehydrogenase family. As to quaternary structure, homotetramer.

It catalyses the reaction (S)-lactaldehyde + NAD(+) + H2O = (S)-lactate + NADH + 2 H(+). It participates in cofactor biosynthesis; coenzyme F420 biosynthesis. In terms of biological role, involved in F420 biosynthesis through the oxidation of lactaldehyde to lactate. The polypeptide is Lactaldehyde dehydrogenase (Methanococcus vannielii (strain ATCC 35089 / DSM 1224 / JCM 13029 / OCM 148 / SB)).